Here is a 750-residue protein sequence, read N- to C-terminus: Photosystem I P700 chlorophyll a apoprotein A1 (750 aa).

Helical transmembrane passes span 70 to 93, 156 to 179, 195 to 219, 291 to 309, 346 to 369, 385 to 411, 433 to 455, and 531 to 549; these read IFSA…FHGA, LYCT…FHYH, LNHH…HVSL, IAHH…GHMY, WHAQ…HHMY, LSLF…IFMV, AIIS…LYIH, and FLVH…LILL. [4Fe-4S] cluster contacts are provided by C573 and C582. The next 2 helical transmembrane spans lie at 589–610 and 664–686; these read HVFL…HFSW and LSAY…MFLF. A chlorophyll a'-binding site is contributed by H675. Chlorophyll a is bound by residues M683 and Y691. W692 serves as a coordination point for phylloquinone. The chain crosses the membrane as a helical span at residues 724-744; sequence AVGVTHYLLGGIATTWAFFLA.

The protein belongs to the PsaA/PsaB family. In terms of assembly, the PsaA/B heterodimer binds the P700 chlorophyll special pair and subsequent electron acceptors. PSI consists of a core antenna complex that captures photons, and an electron transfer chain that converts photonic excitation into a charge separation. The eukaryotic PSI reaction center is composed of at least 11 subunits. Requires P700 is a chlorophyll a/chlorophyll a' dimer, A0 is one or more chlorophyll a, A1 is one or both phylloquinones and FX is a shared 4Fe-4S iron-sulfur center. as cofactor.

Its subcellular location is the plastid. The protein localises to the chloroplast thylakoid membrane. It carries out the reaction reduced [plastocyanin] + hnu + oxidized [2Fe-2S]-[ferredoxin] = oxidized [plastocyanin] + reduced [2Fe-2S]-[ferredoxin]. PsaA and PsaB bind P700, the primary electron donor of photosystem I (PSI), as well as the electron acceptors A0, A1 and FX. PSI is a plastocyanin-ferredoxin oxidoreductase, converting photonic excitation into a charge separation, which transfers an electron from the donor P700 chlorophyll pair to the spectroscopically characterized acceptors A0, A1, FX, FA and FB in turn. Oxidized P700 is reduced on the lumenal side of the thylakoid membrane by plastocyanin. This Gossypium hirsutum (Upland cotton) protein is Photosystem I P700 chlorophyll a apoprotein A1.